Consider the following 982-residue polypeptide: Chromosome partition protein Smc (982 aa).

ATP is bound at residue proline 33 to asparagine 40. 2 coiled-coil regions span residues arginine 171–aspartate 235 and glutamine 263–glutamine 377. One can recognise an SMC hinge domain in the interval threonine 416–leucine 535. Coiled-coil stretches lie at residues leucine 568–asparagine 627, alanine 669–leucine 713, and isoleucine 753–glutamate 818.

Belongs to the SMC family. Homodimer.

It is found in the cytoplasm. In terms of biological role, required for chromosome condensation and partitioning. The chain is Chromosome partition protein Smc from Mycoplasma pneumoniae (strain ATCC 29342 / M129 / Subtype 1) (Mycoplasmoides pneumoniae).